The following is a 189-amino-acid chain: Ribosome maturation factor RimM (189 aa).

The region spanning 110-189 is the PRC barrel domain; sequence DDEYYWKDLI…TVTVDWDPNF (80 aa).

The protein belongs to the RimM family. As to quaternary structure, binds ribosomal protein uS19.

It is found in the cytoplasm. An accessory protein needed during the final step in the assembly of 30S ribosomal subunit, possibly for assembly of the head region. Essential for efficient processing of 16S rRNA. May be needed both before and after RbfA during the maturation of 16S rRNA. It has affinity for free ribosomal 30S subunits but not for 70S ribosomes. In Blochmanniella pennsylvanica (strain BPEN), this protein is Ribosome maturation factor RimM.